Here is a 469-residue protein sequence, read N- to C-terminus: Glutamate--tRNA ligase (469 aa).

The short motif at 9 to 19 (PSPTGFLHVGG) is the 'HIGH' region element. A 'KMSKS' region motif is present at residues 236-240 (KLSKR). An ATP-binding site is contributed by lysine 239.

Belongs to the class-I aminoacyl-tRNA synthetase family. Glutamate--tRNA ligase type 1 subfamily. In terms of assembly, monomer.

Its subcellular location is the cytoplasm. It carries out the reaction tRNA(Glu) + L-glutamate + ATP = L-glutamyl-tRNA(Glu) + AMP + diphosphate. Its function is as follows. Catalyzes the attachment of glutamate to tRNA(Glu) in a two-step reaction: glutamate is first activated by ATP to form Glu-AMP and then transferred to the acceptor end of tRNA(Glu). This Pseudoalteromonas atlantica (strain T6c / ATCC BAA-1087) protein is Glutamate--tRNA ligase.